A 177-amino-acid polypeptide reads, in one-letter code: Nucleoside triphosphate/diphosphate phosphatase (177 aa).

The Proton donor role is filled by arginine 23. Mg(2+) is bound by residues asparagine 87, aspartate 103, aspartate 105, aspartate 107, aspartate 120, and glutamate 123.

The protein belongs to the Ntdp family. Requires Mg(2+) as cofactor.

It catalyses the reaction a ribonucleoside 5'-triphosphate + H2O = a ribonucleoside 5'-diphosphate + phosphate + H(+). The enzyme catalyses a ribonucleoside 5'-diphosphate + H2O = a ribonucleoside 5'-phosphate + phosphate + H(+). Has nucleoside phosphatase activity towards nucleoside triphosphates and nucleoside diphosphates. This chain is Nucleoside triphosphate/diphosphate phosphatase, found in Streptococcus agalactiae serotype Ia (strain ATCC 27591 / A909 / CDC SS700).